The primary structure comprises 409 residues: 4-hydroxy-3-methylbut-2-en-1-yl diphosphate synthase (flavodoxin) (409 aa).

The [4Fe-4S] cluster site is built by C298, C301, C344, and E351.

The protein belongs to the IspG family. Requires [4Fe-4S] cluster as cofactor.

The catalysed reaction is (2E)-4-hydroxy-3-methylbut-2-enyl diphosphate + oxidized [flavodoxin] + H2O + 2 H(+) = 2-C-methyl-D-erythritol 2,4-cyclic diphosphate + reduced [flavodoxin]. It participates in isoprenoid biosynthesis; isopentenyl diphosphate biosynthesis via DXP pathway; isopentenyl diphosphate from 1-deoxy-D-xylulose 5-phosphate: step 5/6. Functionally, converts 2C-methyl-D-erythritol 2,4-cyclodiphosphate (ME-2,4cPP) into 1-hydroxy-2-methyl-2-(E)-butenyl 4-diphosphate. This chain is 4-hydroxy-3-methylbut-2-en-1-yl diphosphate synthase (flavodoxin), found in Dechloromonas aromatica (strain RCB).